A 476-amino-acid chain; its full sequence is Bifunctional protein HldE (476 aa).

The tract at residues 1 to 318 is ribokinase; that stretch reads MKPILPDYSQ…AEAIHGSQDT (318 aa). 195-198 serves as a coordination point for ATP; sequence NMAE. Aspartate 264 is an active-site residue. The interval 344-476 is cytidylyltransferase; sequence MTNGCFDILH…IIKAIKGGRG (133 aa).

It in the N-terminal section; belongs to the carbohydrate kinase PfkB family. The protein in the C-terminal section; belongs to the cytidylyltransferase family. Homodimer.

The enzyme catalyses D-glycero-beta-D-manno-heptose 7-phosphate + ATP = D-glycero-beta-D-manno-heptose 1,7-bisphosphate + ADP + H(+). It catalyses the reaction D-glycero-beta-D-manno-heptose 1-phosphate + ATP + H(+) = ADP-D-glycero-beta-D-manno-heptose + diphosphate. The protein operates within nucleotide-sugar biosynthesis; ADP-L-glycero-beta-D-manno-heptose biosynthesis; ADP-L-glycero-beta-D-manno-heptose from D-glycero-beta-D-manno-heptose 7-phosphate: step 1/4. Its pathway is nucleotide-sugar biosynthesis; ADP-L-glycero-beta-D-manno-heptose biosynthesis; ADP-L-glycero-beta-D-manno-heptose from D-glycero-beta-D-manno-heptose 7-phosphate: step 3/4. Its function is as follows. Catalyzes the phosphorylation of D-glycero-D-manno-heptose 7-phosphate at the C-1 position to selectively form D-glycero-beta-D-manno-heptose-1,7-bisphosphate. In terms of biological role, catalyzes the ADP transfer from ATP to D-glycero-beta-D-manno-heptose 1-phosphate, yielding ADP-D-glycero-beta-D-manno-heptose. The polypeptide is Bifunctional protein HldE (Vibrio atlanticus (strain LGP32) (Vibrio splendidus (strain Mel32))).